A 271-amino-acid chain; its full sequence is Sorting nexin-11 (271 aa).

The PX domain maps to Val-16–Val-132. Residues Arg-59, Lys-85, and Arg-99 each coordinate a 1,2-diacyl-sn-glycero-3-phospho-(1D-myo-inositol-3-phosphate). Positions Ile-135–Val-139 are important for membrane trafficking. Residues Pro-185–Lys-271 form a disordered region. The span at Ser-213–Pro-230 shows a compositional bias: low complexity.

It belongs to the sorting nexin family. Monomer. Interacts with TRPV3; this interaction promotes TRPV3 trafficking from the cell membrane to lysosome for degradation.

The protein resides in the cell membrane. Its subcellular location is the endosome. It localises to the cytoplasm. In terms of biological role, phosphoinositide-binding protein involved in protein sorting and membrane trafficking in endosomes. Regulates the levels of TRPV3 by promoting its trafficking from the cell membrane to lysosome for degradation. This Mus musculus (Mouse) protein is Sorting nexin-11 (Snx11).